Here is a 180-residue protein sequence, read N- to C-terminus: CDP-archaeol synthase (180 aa).

Helical transmembrane passes span 5–25 (LVAT…AAVL), 54–74 (AVGT…AEPA), 78–98 (LGVD…FGAM), 118–138 (AFPG…VFVV), and 142–162 (WALA…TPIL).

This sequence belongs to the CDP-archaeol synthase family. The cofactor is Mg(2+).

The protein localises to the cell membrane. It catalyses the reaction 2,3-bis-O-(geranylgeranyl)-sn-glycerol 1-phosphate + CTP + H(+) = CDP-2,3-bis-O-(geranylgeranyl)-sn-glycerol + diphosphate. It participates in membrane lipid metabolism; glycerophospholipid metabolism. In terms of biological role, catalyzes the formation of CDP-2,3-bis-(O-geranylgeranyl)-sn-glycerol (CDP-archaeol) from 2,3-bis-(O-geranylgeranyl)-sn-glycerol 1-phosphate (DGGGP) and CTP. This reaction is the third ether-bond-formation step in the biosynthesis of archaeal membrane lipids. This Halorubrum lacusprofundi (strain ATCC 49239 / DSM 5036 / JCM 8891 / ACAM 34) protein is CDP-archaeol synthase.